The chain runs to 318 residues: MASGNCTTPTTFILSGLTDNPGLQMPLFMVFLAIYTITLLTNLGLIRLISVDLHLQTPMYIFLQNLSFTDAAYSTVITPKMLATFLEERKTISYVGCILQYFSFVLLTTSECLLLAVMAYDRYVAICKPLLYPAIMTKAVCWRLVESLYFLAFLNSLVHTCGLLKLSFCYSNVVNHFFCDISPLFQISSSSIAISELLVIISGSLFVMSSIIIILISYVFIILTVVMIRSKDGKYKAFSTCTSHLMAVSLFHGTVIFMYLRPVKLFSLDTDKIASLFYTVVIPMLNPLIYSWRNKEVKDALRRLTATTFGFIDSKAVQ.

At 1-26 (MASGNCTTPTTFILSGLTDNPGLQMP) the chain is on the extracellular side. Asparagine 5 is a glycosylation site (N-linked (GlcNAc...) asparagine). Residues 27–49 (LFMVFLAIYTITLLTNLGLIRLI) traverse the membrane as a helical segment. Over 50–57 (SVDLHLQT) the chain is Cytoplasmic. The chain crosses the membrane as a helical span at residues 58 to 79 (PMYIFLQNLSFTDAAYSTVITP). The Extracellular segment spans residues 80–100 (KMLATFLEERKTISYVGCILQ). Cysteine 97 and cysteine 179 are oxidised to a cystine. Residues 101–120 (YFSFVLLTTSECLLLAVMAY) form a helical membrane-spanning segment. Residues 121–139 (DRYVAICKPLLYPAIMTKA) lie on the Cytoplasmic side of the membrane. The helical transmembrane segment at 140 to 164 (VCWRLVESLYFLAFLNSLVHTCGLL) threads the bilayer. Residues 165–205 (KLSFCYSNVVNHFFCDISPLFQISSSSIAISELLVIISGSL) are Extracellular-facing. A helical membrane pass occupies residues 206–226 (FVMSSIIIILISYVFIILTVV). Over 227–239 (MIRSKDGKYKAFS) the chain is Cytoplasmic. The helical transmembrane segment at 240–260 (TCTSHLMAVSLFHGTVIFMYL) threads the bilayer. Over 261-271 (RPVKLFSLDTD) the chain is Extracellular. A helical transmembrane segment spans residues 272–292 (KIASLFYTVVIPMLNPLIYSW). Topologically, residues 293–318 (RNKEVKDALRRLTATTFGFIDSKAVQ) are cytoplasmic.

This sequence belongs to the G-protein coupled receptor 1 family.

Its subcellular location is the cell membrane. In terms of biological role, odorant receptor. This Gallus gallus (Chicken) protein is Olfactory receptor-like protein COR3 (COR3).